Here is a 349-residue protein sequence, read N- to C-terminus: uncharacterized protein (349 aa).

Polar residues predominate over residues 116–135 (HFSQTNPKSTPEPPCTSSSG). The disordered stretch occupies residues 116–148 (HFSQTNPKSTPEPPCTSSSGAGDCHENLPADGY).

This is an uncharacterized protein from Caenorhabditis elegans.